The chain runs to 243 residues: Small ribosomal subunit protein uS2 (243 aa).

Belongs to the universal ribosomal protein uS2 family.

The chain is Small ribosomal subunit protein uS2 from Pseudoalteromonas atlantica (strain T6c / ATCC BAA-1087).